A 215-amino-acid polypeptide reads, in one-letter code: Flagellin B1 (215 aa).

Residues 1-12 (MSVKNFMNNKKG) constitute a propeptide that is removed on maturation.

The protein belongs to the archaeal flagellin family.

It localises to the archaeal flagellum. In terms of biological role, flagellin is the subunit protein which polymerizes to form the filaments of archaeal flagella. The sequence is that of Flagellin B1 (flaB1) from Methanococcus vannielii (strain ATCC 35089 / DSM 1224 / JCM 13029 / OCM 148 / SB).